Consider the following 182-residue polypeptide: Glutamyl-tRNA(Gln) amidotransferase subunit F, mitochondrial (182 aa).

Belongs to the GatF family. In terms of assembly, subunit of the heterotrimeric GatFAB amidotransferase (AdT) complex, composed of A, B and F subunits.

It localises to the mitochondrion inner membrane. The catalysed reaction is L-glutamyl-tRNA(Gln) + L-glutamine + ATP + H2O = L-glutaminyl-tRNA(Gln) + L-glutamate + ADP + phosphate + H(+). Functionally, allows the formation of correctly charged Gln-tRNA(Gln) through the transamidation of misacylated Glu-tRNA(Gln) in the mitochondria. The reaction takes place in the presence of glutamine and ATP through an activated gamma-phospho-Glu-tRNA(Gln). Required for proper protein synthesis within the mitochondrion. The protein is Glutamyl-tRNA(Gln) amidotransferase subunit F, mitochondrial of Candida tropicalis (strain ATCC MYA-3404 / T1) (Yeast).